The following is an 85-amino-acid chain: uncharacterized protein (85 aa).

This is an uncharacterized protein from Bacillus subtilis (strain 168).